We begin with the raw amino-acid sequence, 447 residues long: Transducin beta-like protein 2 (447 aa).

The tract at residues 38–72 (RSGRPACQKANGFPPDKSSGSKKQKQYQRIRKEKP) is disordered. Positions 57-69 (GSKKQKQYQRIRK) are enriched in basic residues. 7 WD repeats span residues 88–127 (SHSGNISCMDFSSNGKYLATCADDRTIRIWSTKDFLQREH), 134–174 (VELD…DGGY), 186–226 (KHKA…STIN), 228–267 (NQMNNTHAAVSPCGRFVASCGFTPDVKVWEVCFGKKGEFQ), 277–316 (GHSAAVHSFAFSNDSRRMASVSKDGTWKLWDTDVEYKKKQ), 329–367 (AAGAAPCRLALSPNAQVLALASGSSIHLYNTRRGEKEEC), and 371–409 (VHGECIANLSFDITGRFLASCGDRAVRLFHNTPGHRAMV). A Glycyl lysine isopeptide (Lys-Gly) (interchain with G-Cter in SUMO2) cross-link involves residue Lys-168. Position 433 is a phosphothreonine; by ATM or ATR (Thr-433).

The polypeptide is Transducin beta-like protein 2 (TBL2) (Homo sapiens (Human)).